The following is a 567-amino-acid chain: uncharacterized protein (567 aa).

Residues Met-1–Ser-31 lie on the Lumenal side of the membrane. Residues Ser-32 to Val-52 traverse the membrane as a helical segment. Residues Gln-53–Val-64 are Cytoplasmic-facing. A helical membrane pass occupies residues Ile-65–Ile-85. Residues Gln-86–Asn-87 are Lumenal-facing. Residues Met-88–Ser-108 traverse the membrane as a helical segment. The Cytoplasmic segment spans residues Gly-109–Ala-128. The helical transmembrane segment at Phe-129–Leu-149 threads the bilayer. The Lumenal segment spans residues Asn-150–Val-159. Residues Glu-160–Phe-180 traverse the membrane as a helical segment. The Cytoplasmic segment spans residues Asn-181–Lys-188. Residues Leu-189–Glu-209 traverse the membrane as a helical segment. Residues Thr-210–Gly-227 are Lumenal-facing. The chain crosses the membrane as a helical span at residues Ile-228–Ile-248. The Cytoplasmic portion of the chain corresponds to Thr-249 to Tyr-277. The helical transmembrane segment at Phe-278–Leu-298 threads the bilayer. Over Lys-299–Lys-315 the chain is Lumenal. A helical transmembrane segment spans residues Tyr-316–Phe-338. The Cytoplasmic segment spans residues Thr-339–Pro-347. Residues Ile-348–Phe-366 traverse the membrane as a helical segment. Over Pro-367–Gln-392 the chain is Lumenal. The chain crosses the membrane as a helical span at residues Met-393–Glu-413. At Gly-414 to Thr-424 the chain is on the cytoplasmic side. Residues Leu-425–Ile-445 traverse the membrane as a helical segment. Residues Leu-446–Lys-567 lie on the Lumenal side of the membrane. Position 515 is a phosphoserine (Ser-515).

It belongs to the monovalent cation:proton antiporter 1 (CPA1) transporter (TC 2.A.36) family.

Its subcellular location is the golgi apparatus membrane. This is an uncharacterized protein from Schizosaccharomyces pombe (strain 972 / ATCC 24843) (Fission yeast).